We begin with the raw amino-acid sequence, 520 residues long: Developmental regulatory protein wetA (520 aa).

Disordered stretches follow at residues 49–72 (GDLP…NEWS), 104–165 (VPSR…MRSS), 236–295 (QSPS…WQSD), 367–453 (DHSF…GSNK), and 471–496 (LTGV…RRRK). Polar residues-rich tracts occupy residues 63–72 (SPQPWSNEWS), 104–114 (VPSRPTASHGL), and 155–165 (QSFSPSLMRSS). Over residues 237–251 (SPSVSMPSPSIAMSA) the composition is skewed to low complexity. Residues 252 to 261 (RQQQHYIAQP) are compositionally biased toward polar residues. The segment covering 262–295 (SSSSLTNSSPSSADDIFSSSHSSDPHSLSSWQSD) has biased composition (low complexity). Residues 367-401 (DHSFSSSNMLPATPQKFDTSFNTSQVHNVSRSPSL) show a composition bias toward polar residues. The segment covering 420-429 (PTHRRTHSRK) has biased composition (basic residues). The segment covering 436 to 453 (NAPKPAKASGSSSRGSNK) has biased composition (low complexity).

It belongs to the wetA family.

In terms of biological role, brlA, abaA and wetA are pivotal regulators of conidiophore development and conidium maturation. They act individually and together to regulate their own expression and that of numerous other sporulation-specific genes. Responsible for activating a set of genes whose products make up the final two conidial wall layers or direct their assembly and though this activity is responsible for acquisition of spore dormancy. The protein is Developmental regulatory protein wetA of Penicillium rubens (strain ATCC 28089 / DSM 1075 / NRRL 1951 / Wisconsin 54-1255) (Penicillium chrysogenum).